A 164-amino-acid chain; its full sequence is 17.8 kDa class II heat shock protein (164 aa).

One can recognise a sHSP domain in the interval 48–164; that stretch reads DARAMAATPA…KPKTIEVKVA (117 aa).

It belongs to the small heat shock protein (HSP20) family.

It localises to the cytoplasm. This is 17.8 kDa class II heat shock protein from Zea mays (Maize).